A 338-amino-acid polypeptide reads, in one-letter code: Ferredoxin--NADP reductase (338 aa).

Positions 14, 33, 41, 46, 86, 120, 284, and 325 each coordinate FAD.

This sequence belongs to the ferredoxin--NADP reductase type 2 family. Homodimer. FAD serves as cofactor.

It carries out the reaction 2 reduced [2Fe-2S]-[ferredoxin] + NADP(+) + H(+) = 2 oxidized [2Fe-2S]-[ferredoxin] + NADPH. The protein is Ferredoxin--NADP reductase of Pelagibacter ubique (strain HTCC1062).